A 357-amino-acid chain; its full sequence is UPF0283 membrane protein BAbS19_I09770 (357 aa).

Residues 1 to 36 (MSDKTPRKPTAFRLEQPARVSAASEQEEPRRPRAVK) form a disordered region. A compositionally biased stretch (basic and acidic residues) spans 27–36 (EEPRRPRAVK). Helical transmembrane passes span 78–98 (ILFGALGILVSFAIGIWTEDL) and 109–129 (LGWTALGVAMVALAAFAAIIL).

This sequence belongs to the UPF0283 family.

The protein resides in the cell inner membrane. The sequence is that of UPF0283 membrane protein BAbS19_I09770 from Brucella abortus (strain S19).